Reading from the N-terminus, the 119-residue chain is Ribonuclease P protein component (119 aa).

Belongs to the RnpA family. In terms of assembly, consists of a catalytic RNA component (M1 or rnpB) and a protein subunit.

The catalysed reaction is Endonucleolytic cleavage of RNA, removing 5'-extranucleotides from tRNA precursor.. RNaseP catalyzes the removal of the 5'-leader sequence from pre-tRNA to produce the mature 5'-terminus. It can also cleave other RNA substrates such as 4.5S RNA. The protein component plays an auxiliary but essential role in vivo by binding to the 5'-leader sequence and broadening the substrate specificity of the ribozyme. In Syntrophomonas wolfei subsp. wolfei (strain DSM 2245B / Goettingen), this protein is Ribonuclease P protein component.